The chain runs to 458 residues: RuvB-like protein 1 (458 aa).

73–80 provides a ligand contact to ATP; the sequence is GPPGTGKT.

It belongs to the RuvB family. Interacts with FRI, and with FLX and FES1, two component of the transcription activator complex FRI-C. Interacts with the disease resistance genes RPM1 and RPP5.

It localises to the nucleus. It catalyses the reaction ATP + H2O = ADP + phosphate + H(+). Functionally, proposed core component of the chromatin remodeling INO80 complex which is involved in transcriptional regulation, DNA replication and probably DNA repair. Component of the NuA4 histone acetyltransferase complex which is involved in transcriptional activation of select genes principally by acetylation of nucleosomal histones H4 and H2A. Has single-stranded DNA-stimulated ATPase and ATP-dependent DNA helicase (3' to 5') activity suggesting a role in nuclear processes such as recombination and transcription. This Arabidopsis thaliana (Mouse-ear cress) protein is RuvB-like protein 1 (RIN1).